A 362-amino-acid chain; its full sequence is Tryptophan 2,3-dioxygenase (362 aa).

Residues 40–44 (FIIVH) and Arg111 each bind substrate. Residue His297 participates in heme binding. Thr311 lines the substrate pocket.

The protein belongs to the tryptophan 2,3-dioxygenase family. As to quaternary structure, homotetramer. Requires heme as cofactor.

It carries out the reaction L-tryptophan + O2 = N-formyl-L-kynurenine. Its pathway is amino-acid degradation; L-tryptophan degradation via kynurenine pathway; L-kynurenine from L-tryptophan: step 1/2. In terms of biological role, heme-dependent dioxygenase that catalyzes the oxidative cleavage of the L-tryptophan (L-Trp) pyrrole ring and converts L-tryptophan to N-formyl-L-kynurenine. Catalyzes the oxidative cleavage of the indole moiety. The polypeptide is Tryptophan 2,3-dioxygenase (Alteromonas mediterranea (strain DSM 17117 / CIP 110805 / LMG 28347 / Deep ecotype)).